Consider the following 231-residue polypeptide: Red fluorescent protein eqFP611 (231 aa).

The segment at residues 63-65 (MYG) is a cross-link (2-iminomethyl-5-imidazolinone (Met-Gly)). Position 64 is a (E)-2,3-didehydrotyrosine (Y64).

This sequence belongs to the GFP family. Monomer. In terms of processing, contains a chromophore consisting of modified amino acid residues. The chromophore is formed by autocatalytic backbone condensation between Xaa-N and Gly-(N+2), oxidation of Tyr-(N+1) to didehydrotyrosine, and formation of a double bond to the alpha-amino nitrogen of residue Xaa-N. Maturation of the chromophore requires nothing other than molecular oxygen.

In terms of biological role, pigment protein. This is Red fluorescent protein eqFP611 from Entacmaea quadricolor (Bubble-tip anemone).